A 44-amino-acid polypeptide reads, in one-letter code: Large ribosomal subunit protein bL34 (44 aa).

This sequence belongs to the bacterial ribosomal protein bL34 family.

In Wolbachia pipientis wMel, this protein is Large ribosomal subunit protein bL34.